A 410-amino-acid polypeptide reads, in one-letter code: Venom metalloproteinase 2 (410 aa).

An N-terminal signal peptide occupies residues 1-22 (MDTFILTYSILFLALFIESIHS). Residues asparagine 64, asparagine 112, asparagine 187, asparagine 231, asparagine 292, and asparagine 307 are each glycosylated (N-linked (GlcNAc...) asparagine). One can recognise a Peptidase M12B domain in the interval 214 to 410 (FYPKLLVLVD…NNNVSKFIWS (197 aa)). Histidine 365 provides a ligand contact to Zn(2+). Glutamate 366 is a catalytic residue. Residues histidine 369 and histidine 375 each contribute to the Zn(2+) site. The N-linked (GlcNAc...) asparagine glycan is linked to asparagine 403.

In the C-terminal section; belongs to the venom metalloproteinase (M12B) family. Monomer. Zn(2+) serves as cofactor. In terms of tissue distribution, expressed by the venom gland.

The protein localises to the secreted. Its activity is regulated as follows. The gelatinase activity is inhibited by EDTA. Functionally, the recombinant protein has gelatinase activity. In vivo, injection of this recombinant into fifth instar L.oleracea (host) larvae results in partial insect mortality associated with the molt to sixth instar, with surviving insects showing retarded development and growth. The polypeptide is Venom metalloproteinase 2 (Eulophus pennicornis (Parasitoid wasp)).